Here is a 383-residue protein sequence, read N- to C-terminus: E3 ubiquitin-protein ligase Os04g0590900 (383 aa).

A helical transmembrane segment spans residues 53–73 (PVFSPLVIAIIGVLASAFLLV). A disordered region spans residues 105 to 129 (GGAGSGGRHGHGQSRSHESWNVSPP). The RING-type; atypical zinc finger occupies 157 to 199 (CSVCLGEFSDGESLRLLPRCSHAFHQQCIDTWLKSHSNCPLCR). Disordered regions lie at residues 269 to 291 (EANG…SSFD) and 320 to 383 (LLAG…DHPM).

The protein localises to the membrane. It carries out the reaction S-ubiquitinyl-[E2 ubiquitin-conjugating enzyme]-L-cysteine + [acceptor protein]-L-lysine = [E2 ubiquitin-conjugating enzyme]-L-cysteine + N(6)-ubiquitinyl-[acceptor protein]-L-lysine.. It functions in the pathway protein modification; protein ubiquitination. Functionally, possesses E3 ubiquitin-protein ligase in vitro. This Oryza sativa subsp. japonica (Rice) protein is E3 ubiquitin-protein ligase Os04g0590900.